Reading from the N-terminus, the 191-residue chain is Syndecan-2-A (191 aa).

Positions 1–22 (MRNVWLIVPFALLAALSGETWA) are cleaved as a signal peptide. Residues 23 to 137 (QADRDLYIDS…NLFHRTEVLA (115 aa)) lie on the Extracellular side of the membrane. Residues 32-60 (STESSGNYPVDDDDYSSGSGSGIPARGDD) are disordered. Ser-36, Ser-48, Ser-50, and Ser-52 each carry an O-linked (Xyl...) (glycosaminoglycan) serine glycan. Residues 138–158 (AVIAGGGIGFLFAVFLILLLV) traverse the membrane as a helical segment. Topologically, residues 159–191 (YRMRKKDEGSYDLGERKPSSAVYQKAPTKEFYA) are cytoplasmic. Residues 168-191 (SYDLGERKPSSAVYQKAPTKEFYA) are disordered.

This sequence belongs to the syndecan proteoglycan family. In terms of processing, O-glycosylated; contains both heparan sulfate and chondroitin sulfate.

It localises to the membrane. Cell surface proteoglycan. In Xenopus laevis (African clawed frog), this protein is Syndecan-2-A (sdc2-a).